Consider the following 765-residue polypeptide: Protein transport protein Sec23A (765 aa).

Zn(2+) is bound by residues Cys61, Cys66, Cys85, and Cys88. The stretch at 632 to 718 (PEPVLLDSSS…EHGGSQARFL (87 aa)) is one Gelsolin-like repeat.

Belongs to the SEC23/SEC24 family. SEC23 subfamily. COPII is composed of at least five proteins: the Sec23/24 complex, the Sec13/31 complex and Sar1.

The protein localises to the cytoplasmic vesicle. It localises to the COPII-coated vesicle membrane. It is found in the endoplasmic reticulum membrane. The protein resides in the cytoplasm. Its subcellular location is the cytosol. In terms of biological role, component of the coat protein complex II (COPII) which promotes the formation of transport vesicles from the endoplasmic reticulum (ER). The coat has two main functions, the physical deformation of the endoplasmic reticulum membrane into vesicles and the selection of cargo molecules for their transport to the Golgi complex. In Danio rerio (Zebrafish), this protein is Protein transport protein Sec23A.